Here is a 149-residue protein sequence, read N- to C-terminus: Hordoindoline-A (149 aa).

The signal sequence occupies residues 1–19 (MKALFLMGLLALVASAAFA). The propeptide occupies 20–28 (QYGEVVGSY). A propeptide spans 148-149 (YW) (removed in mature form).

Post-translationally, five disulfide bonds are present. As to expression, found in endosperm and aleurone layer of developing kernels, but not in the embryo.

It localises to the membrane. The protein localises to the secreted. It is found in the extracellular space. In terms of biological role, acts as a membranotoxin, probably through its antibacterial and antifungal activities, contributing to the defense mechanism of the plant against predators. Forms monovalent cation-selective ion channels in membranes. Contributes to grain texture and hardness. The protein is Hordoindoline-A (HINA) of Hordeum vulgare (Barley).